The chain runs to 1125 residues: Kinase and exchange factor for Rac B (1125 aa).

3 disordered regions span residues 50 to 175 (VTGG…ASIN), 247 to 287 (SVPG…GGKF), and 322 to 362 (KTRD…VNSD). The segment covering 59–91 (NNQQQQQNNNNNNNNNNNNNNNNNNNNNNNNNN) has biased composition (low complexity). Polar residues predominate over residues 92 to 106 (SGEISSNNSTPSILF). Over residues 113 to 124 (TAPPAPPQPTTP) the composition is skewed to pro residues. Positions 137-161 (NINQQPIGGVNNNNNNNNKDSPSNK) are enriched in low complexity. The 192-residue stretch at 380-571 (KRRQVSLQIL…KSTVDYVKEK (192 aa)) folds into the DH domain. The 222-residue stretch at 601-822 (RYVREGMLTE…WIQAIHANII (222 aa)) folds into the PH domain. Disordered regions lie at residues 693 to 729 (INNMTNNDSKSKNNNNNNSNGNNNNNNINSNSNSNNN) and 761 to 791 (SNNNNNNNINSNNNINGNNNNGNNSVNYSNG). Positions 694–729 (NNMTNNDSKSKNNNNNNSNGNNNNNNINSNSNSNNN) are enriched in low complexity. In terms of domain architecture, Protein kinase spans 848–1117 (IKLCEQIGSG…QLVQKLTKML (270 aa)). ATP is bound by residues 854 to 862 (IGSGGSGCT) and lysine 876. Residue aspartate 971 is the Proton acceptor of the active site.

The protein belongs to the protein kinase superfamily. STE Ser/Thr protein kinase family. Mg(2+) serves as cofactor.

It carries out the reaction L-seryl-[protein] + ATP = O-phospho-L-seryl-[protein] + ADP + H(+). It catalyses the reaction L-threonyl-[protein] + ATP = O-phospho-L-threonyl-[protein] + ADP + H(+). This is Kinase and exchange factor for Rac B from Dictyostelium discoideum (Social amoeba).